Reading from the N-terminus, the 346-residue chain is Phosphoribosylformylglycinamidine cyclo-ligase (346 aa).

The protein belongs to the AIR synthase family.

The protein resides in the cytoplasm. It catalyses the reaction 2-formamido-N(1)-(5-O-phospho-beta-D-ribosyl)acetamidine + ATP = 5-amino-1-(5-phospho-beta-D-ribosyl)imidazole + ADP + phosphate + H(+). The protein operates within purine metabolism; IMP biosynthesis via de novo pathway; 5-amino-1-(5-phospho-D-ribosyl)imidazole from N(2)-formyl-N(1)-(5-phospho-D-ribosyl)glycinamide: step 2/2. The sequence is that of Phosphoribosylformylglycinamidine cyclo-ligase from Proteus mirabilis (strain HI4320).